The sequence spans 250 residues: Mediator of RNA polymerase II transcription subunit 6 (250 aa).

A disordered region spans residues 166–250 (KKREEEKKED…EPTARTTSKQ (85 aa)). Residues 204–223 (PAEDALEREEKEEVEEEEEE) show a composition bias toward acidic residues. Over residues 224 to 239 (TLKTEEPTTSTDEPKF) the composition is skewed to basic and acidic residues.

Belongs to the Mediator complex subunit 6 family. In terms of assembly, component of the Mediator complex. Interacts with let-19/mdt-13. Interacts with RNA polymerase II. Interacts with mdt-28.

It localises to the nucleus. Its function is as follows. Component of the Mediator complex, a coactivator involved in the regulated transcription of nearly all RNA polymerase II-dependent genes. Mediator functions as a bridge to convey information from gene-specific regulatory proteins to the basal RNA polymerase II transcription machinery. Mediator is recruited to promoters by direct interactions with regulatory proteins and serves as a scaffold for the assembly of a functional preinitiation complex with RNA polymerase II and the general transcription factors. Acts to repress beta-catenin target genes. Required for asymmetric division of T-cells and for gonad and germ cell development. In Caenorhabditis elegans, this protein is Mediator of RNA polymerase II transcription subunit 6 (mdt-6).